Here is a 185-residue protein sequence, read N- to C-terminus: Casparian strip membrane protein 1 (185 aa).

The Cytoplasmic segment spans residues Met-1–Arg-32. Residues Ile-33–Leu-53 traverse the membrane as a helical segment. Topologically, residues Ser-54–Lys-73 are extracellular. The helical transmembrane segment at Phe-74–Ile-94 threads the bilayer. Residues Phe-95–Arg-106 are Cytoplasmic-facing. The helical transmembrane segment at Val-107–Ala-127 threads the bilayer. Residues Ala-128 to Ser-160 lie on the Extracellular side of the membrane. Residue Asn-138 is glycosylated (N-linked (GlcNAc...) asparagine). The chain crosses the membrane as a helical span at residues Leu-161–Ala-181. Residues Leu-182–Arg-185 lie on the Cytoplasmic side of the membrane.

This sequence belongs to the Casparian strip membrane proteins (CASP) family. Homodimer and heterodimers.

Its subcellular location is the cell membrane. In terms of biological role, regulates membrane-cell wall junctions and localized cell wall deposition. Required for establishment of the Casparian strip membrane domain (CSD) and the subsequent formation of Casparian strips, a cell wall modification of the root endodermis that determines an apoplastic barrier between the intraorganismal apoplasm and the extraorganismal apoplasm and prevents lateral diffusion. This Solanum demissum (Wild potato) protein is Casparian strip membrane protein 1.